The primary structure comprises 89 residues: MAAQIPESDQIKQFKEFLGTYNKLTETCFLDCVKDFTTREVKPEEVTCSEHCLQKYLKMTQRISMRFQEYHIQQNEALAAKAGLLGQPR.

Ala2 carries the N-acetylalanine modification. Positions 28 to 52 (CFLDCVKDFTTREVKPEEVTCSEHC) match the Twin CX3C motif motif. Intrachain disulfides connect Cys28-Cys52 and Cys32-Cys48.

Belongs to the small Tim family. Heterohexamer; composed of 3 copies of TIMM9 and 3 copies of TIMM10/TIM10A, named soluble 70 kDa complex. The complex forms a 6-bladed alpha-propeller structure and associates with the TIMM22 component of the TIM22 complex. Interacts with multi-pass transmembrane proteins in transit. Also forms a complex composed of TIMM9, TIMM10/TIM10A and FXC1/TIM10B.

Its subcellular location is the mitochondrion inner membrane. Mitochondrial intermembrane chaperone that participates in the import and insertion of multi-pass transmembrane proteins into the mitochondrial inner membrane. May also be required for the transfer of beta-barrel precursors from the TOM complex to the sorting and assembly machinery (SAM complex) of the outer membrane. Acts as a chaperone-like protein that protects the hydrophobic precursors from aggregation and guide them through the mitochondrial intermembrane space. The chain is Mitochondrial import inner membrane translocase subunit Tim9 (Timm9) from Rattus norvegicus (Rat).